Consider the following 1060-residue polypeptide: FACT complex subunit SPT16 (1060 aa).

The segment at Phe458–Glu490 is disordered. A compositionally biased stretch (polar residues) spans Leu478–Glu490. The stretch at Asn508–Glu532 forms a coiled coil. The tract at residues Gln977–Asp1060 is disordered. Composition is skewed to acidic residues over residues Glu979–Ser990 and Glu997–Asp1044. Basic and acidic residues predominate over residues Ala1045–Asp1060.

The protein belongs to the peptidase M24 family. SPT16 subfamily. As to quaternary structure, forms a stable heterodimer with POB3. The SPT16-POB3 dimer weakly associates with multiple molecules of NHP6 to form the FACT complex.

Its subcellular location is the nucleus. It is found in the chromosome. Functionally, component of the FACT complex, a general chromatin factor that acts to reorganize nucleosomes. The FACT complex is involved in multiple processes that require DNA as a template such as mRNA elongation, DNA replication and DNA repair. During transcription elongation the FACT complex acts as a histone chaperone that both destabilizes and restores nucleosomal structure. It facilitates the passage of RNA polymerase II and transcription by promoting the dissociation of one histone H2A-H2B dimer from the nucleosome, then subsequently promotes the reestablishment of the nucleosome following the passage of RNA polymerase II. The protein is FACT complex subunit SPT16 (CDC68) of Candida albicans (strain SC5314 / ATCC MYA-2876) (Yeast).